Consider the following 1350-residue polypeptide: Nidogen (1350 aa).

The N-terminal stretch at 1–22 (MPTFGSKLLACLLLSSVILVSG) is a signal peptide. Residues 107 to 260 (AFYSNVDTSF…GVWLFEVAPI (154 aa)) enclose the NIDO domain. Asn231 carries N-linked (GlcNAc...) asparagine glycosylation. An EGF-like 1 domain is found at 281–321 (LALSCQAHAHQCHEKAECHDKAEGYCCVCGSGFYGNGKSCL). Intrachain disulfides connect Cys285–Cys298, Cys292–Cys307, and Cys309–Cys320. The region spanning 325-550 (QPIRVTGTLT…GVTPESNACN (226 aa)) is the Nidogen G2 beta-barrel domain. Residues Asn423 and Asn480 are each glycosylated (N-linked (GlcNAc...) asparagine). The 39-residue stretch at 545-583 (ESNACNDGTADCVENSVCVPYEDTYRCDCYHGFAAQLDE) folds into the EGF-like 2 domain. 5 disulfides stabilise this stretch: Cys549–Cys562, Cys556–Cys571, Cys595–Cys608, Cys602–Cys617, and Cys619–Cys630. The 41-residue stretch at 591–631 (DIDECATGSHVCDENAVCDNTEGGFNCYCTEGFEGNGYRCL) folds into the EGF-like 3; calcium-binding domain. Residue Asn633 is glycosylated (N-linked (GlcNAc...) asparagine). The segment at 645 to 691 (VEGQAEPTSEPSPNPSPYPDQGQDQEREREDDQYPQPNPYPYPEEQI) is disordered. EGF-like domains lie at 788–829 (DLIP…YNCD), 832–874 (SDDS…FNCQ), 912–953 (PAGR…TGCT), 955–996 (KPLS…YVCI), and 997–1037 (EEQN…SLCQ). 15 disulfide bridges follow: Cys792/Cys804, Cys798/Cys815, Cys817/Cys828, Cys836/Cys849, Cys843/Cys860, Cys862/Cys873, Cys916/Cys927, Cys921/Cys938, Cys940/Cys952, Cys959/Cys971, Cys965/Cys982, Cys984/Cys995, Cys1001/Cys1014, Cys1008/Cys1023, and Cys1025/Cys1036. The N-linked (GlcNAc...) asparagine glycan is linked to Asn801. A glycan (N-linked (GlcNAc...) asparagine) is linked at Asn1032. LDL-receptor class B repeat units follow at residues 1084–1126 (GRVY…DVIS), 1127–1170 (RRLY…DPYR), 1171–1216 (EKLF…LENS), and 1257–1282 (DQFY…QTPI).

In terms of tissue distribution, expressed in the basement membrane around the follicular epithelium of the adult ovary (at protein level).

The protein resides in the secreted. Its subcellular location is the extracellular space. The protein localises to the extracellular matrix. It localises to the basement membrane. Functionally, cell adhesion glycoprotein which is widely distributed in basement membranes. Involved in cell-extracellular matrix (ECM) interactions probably by connecting the laminin and collagen IV networks. Required for permeability and mechanical stability of basement membranes, and ECM dependent neural plasticity. Not involved in assembly of the embryonic basement membrane. The polypeptide is Nidogen (Drosophila melanogaster (Fruit fly)).